Reading from the N-terminus, the 897-residue chain is Transportin-2 (897 aa).

HEAT repeat units follow at residues 9–36, 41–79, 88–121, 127–164, 171–201, 214–241, 253–280, 296–386, 394–422, 434–461, 475–508, 516–549, 557–595, 603–654, 665–696, 704–737, 745–790, 798–831, 840–871, and 874–894; these read GLQQVLQLLKDSQSPNTATQRIVQDKLK, FPDFNNYLIFVLTRLKSEDEPTRSLSGLILKNNVKAHYQ, FIKQECLNNIGDASSLIRATIGILITTIASKGEL, LLPQLCNLLNSEDYNTCEGAFGALQKICEDSSELLDSD, NIMIPKFLQFFKHCSPKIRSHAIACVNQFIM, FIEHLFALAVDDDPEVRKNVCRALVMLL, HSIIQYMLQRTQDHDENVALEACEFWLT, VQLI…LANV, HLLPLLKGLLFHPEWVVKESGILVLGAIA, PELIPHLIQCLSDKKALVRSIACWTLSR, LKPLMTELLKRILDGNKRVQEAACSAFATLEEEA, LSYILDTLVFAFGKYQHKNLLILYDAIGTLADSV, EYIQKLMPPLIQKWNELKDEDKDLFPLLECLSSVATALQ, EPVY…GLGG, IMTLLFQCMQDSMPEVRQSSFALLGDLTKACF, AEFMPILGTNLNPEFISVCNNATWAIGEICMQMG, QMVL…YVCP, QQFIRPWCTSLRNIRDNEEKDSAFRGICMMIGVN, IFFCDAVASWVSPKDDLRDMFYKILHGFKDQV, and DNWQQFSEQFPPLLKERLAAF. The region spanning 31–99 is the Importin N-terminal domain; the sequence is VQDKLKQLNQ…KQECLNNIGD (69 aa). The disordered stretch occupies residues 325 to 364; it reads AVPDSEQDIKPRFHKSRTVTLPHEAERPDGSEDAEDDDDD. Residues 355–364 are compositionally biased toward acidic residues; it reads SEDAEDDDDD. Position 862 is an N6-acetyllysine (Lys862).

Belongs to the importin beta family. Importin beta-2 subfamily.

The protein resides in the cytoplasm. It localises to the nucleus. In terms of biological role, probably functions in nuclear protein import as nuclear transport receptor. Serves as receptor for nuclear localization signals (NLS) in cargo substrates. Is thought to mediate docking of the importin/substrate complex to the nuclear pore complex (NPC) through binding to nucleoporin and the complex is subsequently translocated through the pore by an energy requiring, Ran-dependent mechanism. At the nucleoplasmic side of the NPC, Ran binds to the importin, the importin/substrate complex dissociates and importin is re-exported from the nucleus to the cytoplasm where GTP hydrolysis releases Ran. The directionality of nuclear import is thought to be conferred by an asymmetric distribution of the GTP- and GDP-bound forms of Ran between the cytoplasm and nucleus. The sequence is that of Transportin-2 (TNPO2) from Homo sapiens (Human).